The sequence spans 290 residues: Expansin-A26 (290 aa).

Positions 1–29 (MDTTTTMAPLPLLTTTSLLLFFFLASSFA) are cleaved as a signal peptide. The segment at 45 to 67 (DGGGDGEGGGGGDGEGGGGGGGA) is disordered. The Expansin-like EG45 domain maps to 101 to 196 (GGACGYKDAD…RKVACVRQGG (96 aa)). The region spanning 206–286 (SYNMVMVKNV…DWTYDNTYQA (81 aa)) is the Expansin-like CBD domain. N-linked (GlcNAc...) asparagine glycosylation occurs at asparagine 250.

The protein belongs to the expansin family. Expansin A subfamily. As to expression, expressed in flowers.

The protein resides in the secreted. Its subcellular location is the cell wall. The protein localises to the membrane. May cause loosening and extension of plant cell walls by disrupting non-covalent bonding between cellulose microfibrils and matrix glucans. No enzymatic activity has been found. May be required for rapid internodal elongation in deepwater rice during submergence. This chain is Expansin-A26 (EXPA26), found in Oryza sativa subsp. japonica (Rice).